The following is a 306-amino-acid chain: Armadillo repeat-containing protein 10 (306 aa).

A helical transmembrane segment spans residues 7 to 29 (VGWVAAGLVLGAGACYCIYRLTR). Ser43 bears the Phosphoserine mark. At Thr48 the chain carries Phosphothreonine. Residues 101 to 143 (GGIPIVGSKINSLNQSIKEKALNALNNLSVNVENQTKIKIYVR) form an ARM repeat.

As to quaternary structure, interacts with the DNA-binding domain of p53/TP53.

Its subcellular location is the endoplasmic reticulum membrane. The protein localises to the mitochondrion outer membrane. In terms of biological role, may play a role in cell survival and cell growth. May suppress the transcriptional activity of p53/TP53. In Rattus norvegicus (Rat), this protein is Armadillo repeat-containing protein 10 (Armc10).